The following is a 100-amino-acid chain: Biogenesis of lysosome-related organelles complex 1 subunit CNL1 (100 aa).

A coiled-coil region spans residues 25–46 (SDRVKSLELEATRLVQRQNELV).

Belongs to the BLOC1S4 family. As to quaternary structure, component of the biogenesis of lysosome-related organelles complex-1 (BLOC-1).

It localises to the cytoplasm. Its function is as follows. Component of the biogenesis of lysosome-related organelles complex-1 (BLOC-1), a complex that is involved in endosomal cargo sorting. The sequence is that of Biogenesis of lysosome-related organelles complex 1 subunit CNL1 (CLN1) from Candida glabrata (strain ATCC 2001 / BCRC 20586 / JCM 3761 / NBRC 0622 / NRRL Y-65 / CBS 138) (Yeast).